A 323-amino-acid chain; its full sequence is GILT-like protein C02D5.2 (323 aa).

A helical membrane pass occupies residues 13–32; that stretch reads LICRPILTFSSLHILTAFLI. Asn-35 carries N-linked (GlcNAc...) asparagine glycosylation. 2 consecutive transmembrane segments (helical) span residues 37 to 59 and 87 to 104; these read SYINWSVTIILLILGLYACHRFL and YIYGTIFILSIFLLYRSL. An N-linked (GlcNAc...) asparagine glycan is attached at Asn-289.

It belongs to the GILT family.

The protein localises to the membrane. In Caenorhabditis elegans, this protein is GILT-like protein C02D5.2.